The chain runs to 221 residues: UPF0319 protein CGSHiEE_03630 (221 aa).

The first 21 residues, 1-21, serve as a signal peptide directing secretion; the sequence is MKLRAVVLGLATLCTSTATFA.

It belongs to the UPF0319 family.

This Haemophilus influenzae (strain PittEE) protein is UPF0319 protein CGSHiEE_03630.